The following is a 625-amino-acid chain: Sorting nexin-41 (625 aa).

The tract at residues 1 to 90 is disordered; sequence MDYNIFEAVH…STSSHAVVEA (90 aa). A compositionally biased stretch (low complexity) spans 54 to 86; sequence SPPSSSSLPSSPAHSSSAGSSRASTSSSTSSHA. The PX domain maps to 98–235; the sequence is VSLSMSTTAT…QKFLNPEFNW (138 aa). Positions 153, 155, 179, and 202 each coordinate a 1,2-diacyl-sn-glycero-3-phospho-(1D-myo-inositol-3-phosphate). 2 coiled-coil regions span residues 437–469 and 539–563; these read QFKILERLIIEKETKLSSLTEIENQLQKINESL and QLTEQERSKQIKQLNQDLSKLKDCL.

The protein belongs to the sorting nexin family. Binds to SNX4.

The protein localises to the prevacuolar compartment. The protein resides in the endosome. It localises to the endosome membrane. Functionally, involved in proper sorting of the v-SNARE protein SNC1. The sequence is that of Sorting nexin-41 (SNX41) from Saccharomyces cerevisiae (strain ATCC 204508 / S288c) (Baker's yeast).